We begin with the raw amino-acid sequence, 845 residues long: Ribosome-releasing factor 2, mitochondrial (845 aa).

The transit peptide at 1–28 (MIIATSLRSQTFCTWRAWRAVHSTAVRL) directs the protein to the mitochondrion. The tr-type G domain maps to 38-330 (DRTRNIGIIA…GVVKYLPSPL (293 aa)). Residues 47–54 (AHIDAGKT), 111–115 (DTPGH), and 165–168 (NKMD) each bind GTP.

The protein belongs to the TRAFAC class translation factor GTPase superfamily. Classic translation factor GTPase family. EF-G/EF-2 subfamily.

It is found in the mitochondrion. Its function is as follows. Mitochondrial GTPase that mediates the disassembly of ribosomes from messenger RNA at the termination of mitochondrial protein biosynthesis. Not involved in the GTP-dependent ribosomal translocation step during translation elongation. The polypeptide is Ribosome-releasing factor 2, mitochondrial (Scheffersomyces stipitis (strain ATCC 58785 / CBS 6054 / NBRC 10063 / NRRL Y-11545) (Yeast)).